The primary structure comprises 20 residues: Apidaecin 2+ (20 aa).

Residues 1–13 (GKPNKPRPAPIKP) are compositionally biased toward pro residues. The disordered stretch occupies residues 1–20 (GKPNKPRPAPIKPRPPHPRL).

It localises to the secreted. Antimicrobial peptide active against many Gram-negative enterobacterial and plant-associated bacterial species. Not active against other bacterial species like H.pylori, P.mirabilis, B.pertussis or N.gonorrhoeae. This chain is Apidaecin 2+, found in Pimpla disparis (Parasitic wasp).